Consider the following 88-residue polypeptide: Cell division topological specificity factor (88 aa).

Belongs to the MinE family.

Its function is as follows. Prevents the cell division inhibition by proteins MinC and MinD at internal division sites while permitting inhibition at polar sites. This ensures cell division at the proper site by restricting the formation of a division septum at the midpoint of the long axis of the cell. The protein is Cell division topological specificity factor of Citrobacter koseri (strain ATCC BAA-895 / CDC 4225-83 / SGSC4696).